Consider the following 358-residue polypeptide: Oxidase FUB9 (358 aa).

Residues 6–350 (SSKPQIFSIQ…SPAHLSILNA (345 aa)) enclose the FMN hydroxy acid dehydrogenase domain. Residue Y32 coordinates a 2-oxocarboxylate. 3 residues coordinate FMN: S114, Q138, and T166. R175 serves as a coordination point for a 2-oxocarboxylate. K221 is an FMN binding site. Residue H245 is the Proton acceptor of the active site. R248 is a binding site for a 2-oxocarboxylate. FMN is bound by residues 276-280 (DGGFR) and 299-300 (GR).

It belongs to the FMN-dependent alpha-hydroxy acid dehydrogenase family. It depends on FMN as a cofactor.

The protein operates within mycotoxin biosynthesis. In terms of biological role, oxidase; part of the gene cluster that mediates the biosynthesis of fusaric acid, a mycotoxin with low to moderate toxicity to animals and humans, but with high phytotoxic properties. L-aspartate is suggested as fusaric acid amino acid precursor that is activated and further processed to O-acetyl-L-homoserine by cluster enzymes aspartate kinase FUB3 and homoserine O-acetyltransferase FUB5, as well as enzymes of the primary metabolism. The polyketide synthase (PKS) FUB1 generates the triketide trans-2-hexenal which is presumptively released by the hydrolase FUB4 and linked to the NRPS-bound amino acid precursor by NAD(P)-dependent dehydrogenase FUB6. FUB1, FUB4, and the non-canonical NRPS Fub8 may form an enzyme complex. Further processing of the NRPS-bound intermediate might be carried out by FUB6 and the sulfhydrylase FUB7, enabling a spontaneous electrocyclization to close the carbon backbone of fusaric acid. Dihydrofusaric acid is likely to be released via reduction by the thioester reductase (TR) domain of FUB8 whereupon the final oxidation to fusaric acid may (also) be performed by the FMN-dependent dehydrogenase FUB9. The protein is Oxidase FUB9 of Gibberella fujikuroi (strain CBS 195.34 / IMI 58289 / NRRL A-6831) (Bakanae and foot rot disease fungus).